Consider the following 967-residue polypeptide: Isoleucine--tRNA ligase (967 aa).

The 'HIGH' region signature appears at 68–78 (PYANGTLHMGH). An L-isoleucyl-5'-AMP-binding site is contributed by Glu583. Residues 624–628 (KMSKS) carry the 'KMSKS' region motif. An ATP-binding site is contributed by Lys627. Zn(2+) contacts are provided by Cys937, Cys940, Cys957, and Cys960.

Belongs to the class-I aminoacyl-tRNA synthetase family. IleS type 1 subfamily. As to quaternary structure, monomer. The cofactor is Zn(2+).

The protein localises to the cytoplasm. It catalyses the reaction tRNA(Ile) + L-isoleucine + ATP = L-isoleucyl-tRNA(Ile) + AMP + diphosphate. Catalyzes the attachment of isoleucine to tRNA(Ile). As IleRS can inadvertently accommodate and process structurally similar amino acids such as valine, to avoid such errors it has two additional distinct tRNA(Ile)-dependent editing activities. One activity is designated as 'pretransfer' editing and involves the hydrolysis of activated Val-AMP. The other activity is designated 'posttransfer' editing and involves deacylation of mischarged Val-tRNA(Ile). The chain is Isoleucine--tRNA ligase from Prochlorococcus marinus (strain NATL1A).